A 913-amino-acid chain; its full sequence is Translation initiation factor IF-2 (913 aa).

The interval 1–322 is disordered; it reads MTDNNDDKTL…QEKFRRSQMQ (322 aa). Low complexity predominate over residues 60–113; the sequence is VQPVVAAPKPAAPAPVAARPQAPQPRIHQPGGQQQRPGSSQSQQRSGSSAPQQR. Residues 131 to 180 are compositionally biased toward basic and acidic residues; that stretch reads MEARRRALMEAQARDVVEAKQRAEDEARRKVEEEQRIAAEKMEAANRAAE. Composition is skewed to low complexity over residues 181 to 195, 203 to 238, and 261 to 277; these read EAAA…PAAE, ERPA…AAAP, and PARG…PAAR. One can recognise a tr-type G domain in the interval 411-578; the sequence is SRPPVVTIMG…AILLQAEILD (168 aa). The G1 stretch occupies residues 420–427; it reads GHVDHGKT. A GTP-binding site is contributed by 420–427; that stretch reads GHVDHGKT. The tract at residues 445–449 is G2; sequence GITQH. Positions 466 to 469 are G3; the sequence is DTPG. GTP is bound by residues 466-470 and 520-523; these read DTPGH and NKID. Residues 520–523 form a G4 region; that stretch reads NKID. A G5 region spans residues 556–558; it reads SAK.

Belongs to the TRAFAC class translation factor GTPase superfamily. Classic translation factor GTPase family. IF-2 subfamily.

Its subcellular location is the cytoplasm. Its function is as follows. One of the essential components for the initiation of protein synthesis. Protects formylmethionyl-tRNA from spontaneous hydrolysis and promotes its binding to the 30S ribosomal subunits. Also involved in the hydrolysis of GTP during the formation of the 70S ribosomal complex. The polypeptide is Translation initiation factor IF-2 (Agrobacterium fabrum (strain C58 / ATCC 33970) (Agrobacterium tumefaciens (strain C58))).